We begin with the raw amino-acid sequence, 388 residues long: Chorismate synthase (388 aa).

NADP(+) contacts are provided by arginine 39 and arginine 45. Residues arginine 130 to serine 132, asparagine 251 to alanine 252, glycine 296, lysine 311 to threonine 315, and arginine 337 contribute to the FMN site.

It belongs to the chorismate synthase family. Homotetramer. FMNH2 is required as a cofactor.

The catalysed reaction is 5-O-(1-carboxyvinyl)-3-phosphoshikimate = chorismate + phosphate. The protein operates within metabolic intermediate biosynthesis; chorismate biosynthesis; chorismate from D-erythrose 4-phosphate and phosphoenolpyruvate: step 7/7. In terms of biological role, catalyzes the anti-1,4-elimination of the C-3 phosphate and the C-6 proR hydrogen from 5-enolpyruvylshikimate-3-phosphate (EPSP) to yield chorismate, which is the branch point compound that serves as the starting substrate for the three terminal pathways of aromatic amino acid biosynthesis. This reaction introduces a second double bond into the aromatic ring system. The sequence is that of Chorismate synthase from Streptococcus agalactiae serotype III (strain NEM316).